The primary structure comprises 544 residues: Cytochrome P450 82A1 (544 aa).

Cysteine 481 contributes to the heme binding site.

It belongs to the cytochrome P450 family. Heme is required as a cofactor.

The protein localises to the membrane. The chain is Cytochrome P450 82A1 (CYP82A1) from Pisum sativum (Garden pea).